We begin with the raw amino-acid sequence, 55 residues long: Large ribosomal subunit protein bL33 (55 aa).

It belongs to the bacterial ribosomal protein bL33 family.

This Edwardsiella ictaluri (strain 93-146) protein is Large ribosomal subunit protein bL33.